The following is a 545-amino-acid chain: T-complex protein 1 subunit gamma (545 aa).

Met1 is subject to N-acetylmethionine. A disordered region spans residues 1 to 24 (MMGHRPVLVLSQNTKRESGRKVQS). A Phosphoserine modification is found at Ser11. Residue Lys15 forms a Glycyl lysine isopeptide (Lys-Gly) (interchain with G-Cter in SUMO2) linkage. Residue Gly42 participates in ADP binding. Gly42 contacts ATP. Mg(2+) is bound at residue Asp93. ADP contacts are provided by Gly94, Thr95, Thr96, Ser97, Thr162, and Lys163. ATP-binding residues include Gly94, Thr95, and Thr96. Ser170 is subject to Phosphoserine. Residue Lys222 is modified to N6-acetyllysine. Phosphoserine occurs at positions 243 and 244. Tyr247 carries the post-translational modification Phosphotyrosine. Residues Lys248 and Lys249 each participate in a glycyl lysine isopeptide (Lys-Gly) (interchain with G-Cter in SUMO2) cross-link. Position 252 is a phosphoserine (Ser252). Cys366 and Cys372 are oxidised to a cystine. A Glycyl lysine isopeptide (Lys-Gly) (interchain with G-Cter in SUMO2) cross-link involves residue Lys381. An ADP-binding site is contributed by Gly411. Gly411 serves as a coordination point for ATP. Thr430 and Thr459 each carry phosphothreonine. The ADP site is built by Gly482, Glu483, Glu497, and Lys502. ATP is bound at residue Gly482. Glu497 contributes to the ATP binding site. The disordered stretch occupies residues 526-545 (HKKKGDDQNRQTGAPDAGQE).

It belongs to the TCP-1 chaperonin family. In terms of assembly, component of the chaperonin-containing T-complex (TRiC), a hexadecamer composed of two identical back-to-back stacked rings enclosing a protein folding chamber. Each ring is made up of eight different subunits: TCP1/CCT1, CCT2, CCT3, CCT4, CCT5, CCT6A/CCT6, CCT7, CCT8. Interacts with PACRG. Interacts with DNAAF4. Interacts with DLEC1.

It is found in the cytoplasm. The enzyme catalyses ATP + H2O = ADP + phosphate + H(+). In terms of biological role, component of the chaperonin-containing T-complex (TRiC), a molecular chaperone complex that assists the folding of actin, tubulin and other proteins upon ATP hydrolysis. The TRiC complex mediates the folding of WRAP53/TCAB1, thereby regulating telomere maintenance. As part of the TRiC complex may play a role in the assembly of BBSome, a complex involved in ciliogenesis regulating transports vesicles to the cilia. The chain is T-complex protein 1 subunit gamma (Cct3) from Rattus norvegicus (Rat).